The following is a 176-amino-acid chain: Peptide methionine sulfoxide reductase MsrA (176 aa).

Residue C10 is part of the active site.

Belongs to the MsrA Met sulfoxide reductase family.

The catalysed reaction is L-methionyl-[protein] + [thioredoxin]-disulfide + H2O = L-methionyl-(S)-S-oxide-[protein] + [thioredoxin]-dithiol. The enzyme catalyses [thioredoxin]-disulfide + L-methionine + H2O = L-methionine (S)-S-oxide + [thioredoxin]-dithiol. Its function is as follows. Has an important function as a repair enzyme for proteins that have been inactivated by oxidation. Catalyzes the reversible oxidation-reduction of methionine sulfoxide in proteins to methionine. The chain is Peptide methionine sulfoxide reductase MsrA from Leptospira borgpetersenii serovar Hardjo-bovis (strain JB197).